The sequence spans 349 residues: Probable G-protein coupled receptor 21 (349 aa).

Topologically, residues 1–32 are extracellular; sequence MNSTWDGNQSSHPFCLLALGYLETVRFCLLEV. Residues Asn-2 and Asn-8 are each glycosylated (N-linked (GlcNAc...) asparagine). A helical membrane pass occupies residues 33–53; that stretch reads LIIVFLTVLIISGNIIVIFVF. Residues 54–75 are Cytoplasmic-facing; the sequence is HCAPLLNHHSTSYFIQTMAYAD. Residues 76–96 traverse the membrane as a helical segment; that stretch reads LLVGVSCLVPSLSLLYYPLPI. Over 97-104 the chain is Extracellular; sequence EEAMTCQV. A helical transmembrane segment spans residues 105-125; that stretch reads FGFVVSVLKSISMASLACISI. Residues 126–147 lie on the Cytoplasmic side of the membrane; sequence DRYIAITKPLTYNTLVTPWRLR. The helical transmembrane segment at 148-168 threads the bilayer; the sequence is LCIFLIWLYSTLVFLPSFFHW. Topologically, residues 169–191 are extracellular; sequence GKPGYHGDVFQWCAESWHTNSYF. Residues 192–212 traverse the membrane as a helical segment; that stretch reads TLFIVMMLYAPAALIVCFTYF. Over 213 to 252 the chain is Cytoplasmic; sequence NIFRICQQHTKEISERQARFSSQNGETGEPQTCPDKRYAM. The chain crosses the membrane as a helical span at residues 253-273; it reads VLFRITSVFYVLWLPYIIYFL. Over 274 to 283 the chain is Extracellular; it reads LESSTGCSSR. Residues 284–304 form a helical membrane-spanning segment; sequence LASFLTTWLAISNSFCNCIIY. Residues 305-349 lie on the Cytoplasmic side of the membrane; the sequence is SLSNSVFQRGLKGLSGSLCTSCASHTTAKDPYTVRCKGPPNGSHI.

The protein belongs to the G-protein coupled receptor 1 family.

It localises to the cell membrane. Its function is as follows. Orphan receptor. The protein is Probable G-protein coupled receptor 21 (Gpr21) of Mus musculus (Mouse).